Consider the following 378-residue polypeptide: Chaperone protein DnaJ (378 aa).

The J domain occupies 5 to 70 (DYYEVLGLQK…EKRAMYDQYG (66 aa)). The CR-type zinc-finger motif lies at 135-213 (GVKKDIRIRT…CHGDGRVEKT (79 aa)). Zn(2+) contacts are provided by Cys-148, Cys-151, Cys-165, Cys-168, Cys-187, Cys-190, Cys-201, and Cys-204. CXXCXGXG motif repeat units follow at residues 148-155 (CDTCHGSG), 165-172 (CPHCHGSG), 187-194 (CPSCHGTG), and 201-208 (CKSCHGDG).

This sequence belongs to the DnaJ family. Homodimer. Zn(2+) serves as cofactor.

It localises to the cytoplasm. Functionally, participates actively in the response to hyperosmotic and heat shock by preventing the aggregation of stress-denatured proteins and by disaggregating proteins, also in an autonomous, DnaK-independent fashion. Unfolded proteins bind initially to DnaJ; upon interaction with the DnaJ-bound protein, DnaK hydrolyzes its bound ATP, resulting in the formation of a stable complex. GrpE releases ADP from DnaK; ATP binding to DnaK triggers the release of the substrate protein, thus completing the reaction cycle. Several rounds of ATP-dependent interactions between DnaJ, DnaK and GrpE are required for fully efficient folding. Also involved, together with DnaK and GrpE, in the DNA replication of plasmids through activation of initiation proteins. In Glaesserella parasuis serovar 5 (strain SH0165) (Haemophilus parasuis), this protein is Chaperone protein DnaJ.